Reading from the N-terminus, the 119-residue chain is Hydrogenase maturation factor HypA (119 aa).

Residue H2 participates in Ni(2+) binding. 4 residues coordinate Zn(2+): C73, C76, C89, and C92.

It belongs to the HypA/HybF family.

Its function is as follows. Involved in the maturation of [NiFe] hydrogenases. Required for nickel insertion into the metal center of the hydrogenase. The protein is Hydrogenase maturation factor HypA of Dehalococcoides mccartyi (strain CBDB1).